Consider the following 241-residue polypeptide: Translation initiation factor IF-3 (241 aa).

Residues 178 to 241 (KKTEAMAEAR…EAPAEASTEA (64 aa)) are disordered. The span at 180 to 197 (TEAMAEAREAQAARKAEA) shows a compositional bias: basic and acidic residues. The segment covering 208 to 229 (ADEDIPEGELPEGEVPEAETTE) has biased composition (acidic residues). A compositionally biased stretch (low complexity) spans 230–241 (AAEAPAEASTEA).

Belongs to the IF-3 family. In terms of assembly, monomer.

It is found in the cytoplasm. IF-3 binds to the 30S ribosomal subunit and shifts the equilibrium between 70S ribosomes and their 50S and 30S subunits in favor of the free subunits, thus enhancing the availability of 30S subunits on which protein synthesis initiation begins. This Streptomyces avermitilis (strain ATCC 31267 / DSM 46492 / JCM 5070 / NBRC 14893 / NCIMB 12804 / NRRL 8165 / MA-4680) protein is Translation initiation factor IF-3.